A 714-amino-acid chain; its full sequence is ABC transporter B family member 28 (714 aa).

The next 5 helical transmembrane spans lie at 109-129, 161-181, 240-260, 340-360, and 361-381; these read LSVCLLTLLGCSTCTLSMPVF, IFTIAFVTNMTAIWENVMAIL, ICILFTLSPQLAPVLGLLMLA, VAVYISLLALYCLGGSKVKTG, and ELAVGTVVSFIGYTFTLTFAV. In terms of domain architecture, ABC transmembrane type-1 spans 109-393; it reads LSVCLLTLLG…LVNTFGDLRG (285 aa). Positions 470-708 constitute an ABC transporter domain; sequence VCLDDVHFAY…KGSYASLVGT (239 aa). Residue 505–512 coordinates ATP; the sequence is GSSGAGKS.

The protein belongs to the ABC transporter superfamily. ABCB family. Multidrug resistance exporter (TC 3.A.1.201) subfamily.

Its subcellular location is the membrane. This is ABC transporter B family member 28 (ABCB28) from Arabidopsis thaliana (Mouse-ear cress).